The sequence spans 80 residues: Exodeoxyribonuclease 7 small subunit (80 aa).

Belongs to the XseB family. In terms of assembly, heterooligomer composed of large and small subunits.

The protein localises to the cytoplasm. The enzyme catalyses Exonucleolytic cleavage in either 5'- to 3'- or 3'- to 5'-direction to yield nucleoside 5'-phosphates.. Bidirectionally degrades single-stranded DNA into large acid-insoluble oligonucleotides, which are then degraded further into small acid-soluble oligonucleotides. This chain is Exodeoxyribonuclease 7 small subunit, found in Enterobacter sp. (strain 638).